We begin with the raw amino-acid sequence, 184 residues long: MALPVSLLMALVVLSCHSICSLGCDLPHTHSLGNTRVLMLLGQMRRISPFSCLKDRNDFGFPQEVFDGNQFRKPQAISAVHETIQQIFHLFSTDGSSAAWDESLLDKLYTGLYQQLTELEACLSQEVGVEETPLMNEDSLLAVRRYFQRIALYLQEKKYSPCAWEIVRAEIMRSFSSSTNLPQS.

The N-terminal stretch at 1–23 is a signal peptide; it reads MALPVSLLMALVVLSCHSICSLG. Cystine bridges form between C24–C122 and C52–C162.

This sequence belongs to the alpha/beta interferon family. In terms of assembly, interacts with CR2.

It is found in the secreted. Produced by macrophages, IFN-alpha have antiviral activities. Interferon stimulates the production of two enzymes: a protein kinase and an oligoadenylate synthetase. The protein is Interferon alpha-1 of Equus caballus (Horse).